The primary structure comprises 538 residues: GSY2-interacting protein PIG2 (538 aa).

Phosphoserine is present on residues Ser-162, Ser-196, Ser-296, and Ser-304. In terms of domain architecture, CBM21 spans 384-508 (LNLSRGRPVF…NNDSANYKID (125 aa)).

In terms of biological role, interacts with glycogen synthase 2 (GSY2); possibly also interacts with phosphatase 1 (GLC7). The protein is GSY2-interacting protein PIG2 (PIG2) of Saccharomyces cerevisiae (strain ATCC 204508 / S288c) (Baker's yeast).